The primary structure comprises 473 residues: Siroheme synthase (473 aa).

The tract at residues 1–206 (MDYLPIFMKI…GNTGEAEALL (206 aa)) is precorrin-2 dehydrogenase /sirohydrochlorin ferrochelatase. NAD(+) contacts are provided by residues 22–23 (TV) and 43–44 (PK). Residues 223–473 (GEVYIIGAGP…KSLLDDRVPA (251 aa)) form a uroporphyrinogen-III C-methyltransferase region. P232 serves as a coordination point for S-adenosyl-L-methionine. The active-site Proton acceptor is D255. The Proton donor role is filled by K277. Residues 308–310 (GGD), I313, 338–339 (TA), M390, and G419 contribute to the S-adenosyl-L-methionine site.

In the N-terminal section; belongs to the precorrin-2 dehydrogenase / sirohydrochlorin ferrochelatase family. The protein in the C-terminal section; belongs to the precorrin methyltransferase family.

It carries out the reaction uroporphyrinogen III + 2 S-adenosyl-L-methionine = precorrin-2 + 2 S-adenosyl-L-homocysteine + H(+). It catalyses the reaction precorrin-2 + NAD(+) = sirohydrochlorin + NADH + 2 H(+). The catalysed reaction is siroheme + 2 H(+) = sirohydrochlorin + Fe(2+). Its pathway is cofactor biosynthesis; adenosylcobalamin biosynthesis; precorrin-2 from uroporphyrinogen III: step 1/1. The protein operates within cofactor biosynthesis; adenosylcobalamin biosynthesis; sirohydrochlorin from precorrin-2: step 1/1. It participates in porphyrin-containing compound metabolism; siroheme biosynthesis; precorrin-2 from uroporphyrinogen III: step 1/1. It functions in the pathway porphyrin-containing compound metabolism; siroheme biosynthesis; siroheme from sirohydrochlorin: step 1/1. Its pathway is porphyrin-containing compound metabolism; siroheme biosynthesis; sirohydrochlorin from precorrin-2: step 1/1. Functionally, multifunctional enzyme that catalyzes the SAM-dependent methylations of uroporphyrinogen III at position C-2 and C-7 to form precorrin-2 via precorrin-1. Then it catalyzes the NAD-dependent ring dehydrogenation of precorrin-2 to yield sirohydrochlorin. Finally, it catalyzes the ferrochelation of sirohydrochlorin to yield siroheme. The protein is Siroheme synthase of Hydrogenovibrio crunogenus (strain DSM 25203 / XCL-2) (Thiomicrospira crunogena).